A 488-amino-acid chain; its full sequence is Protein nucleotidyltransferase YdiU (488 aa).

Residues Gly91, Gly93, Arg94, Lys114, Asp126, Gly127, Arg177, and Arg184 each coordinate ATP. The active-site Proton acceptor is Asp253. The Mg(2+) site is built by Asn254 and Asp263. Asp263 lines the ATP pocket.

The protein belongs to the SELO family. It depends on Mg(2+) as a cofactor. Mn(2+) is required as a cofactor.

It catalyses the reaction L-seryl-[protein] + ATP = 3-O-(5'-adenylyl)-L-seryl-[protein] + diphosphate. It carries out the reaction L-threonyl-[protein] + ATP = 3-O-(5'-adenylyl)-L-threonyl-[protein] + diphosphate. The catalysed reaction is L-tyrosyl-[protein] + ATP = O-(5'-adenylyl)-L-tyrosyl-[protein] + diphosphate. The enzyme catalyses L-histidyl-[protein] + UTP = N(tele)-(5'-uridylyl)-L-histidyl-[protein] + diphosphate. It catalyses the reaction L-seryl-[protein] + UTP = O-(5'-uridylyl)-L-seryl-[protein] + diphosphate. It carries out the reaction L-tyrosyl-[protein] + UTP = O-(5'-uridylyl)-L-tyrosyl-[protein] + diphosphate. In terms of biological role, nucleotidyltransferase involved in the post-translational modification of proteins. It can catalyze the addition of adenosine monophosphate (AMP) or uridine monophosphate (UMP) to a protein, resulting in modifications known as AMPylation and UMPylation. This is Protein nucleotidyltransferase YdiU from Bacillus cereus (strain B4264).